Here is a 249-residue protein sequence, read N- to C-terminus: Probable septum site-determining protein MinC (249 aa).

The interval 115-144 (PTAVSPPPPPPPPPARAEPAPPAARPAPGR) is disordered. The span at 118–139 (VSPPPPPPPPPARAEPAPPAAR) shows a compositional bias: pro residues.

This sequence belongs to the MinC family. In terms of assembly, interacts with MinD and FtsZ.

Its function is as follows. Cell division inhibitor that blocks the formation of polar Z ring septums. Rapidly oscillates between the poles of the cell to destabilize FtsZ filaments that have formed before they mature into polar Z rings. Prevents FtsZ polymerization. The chain is Probable septum site-determining protein MinC from Xanthomonas axonopodis pv. citri (strain 306).